The primary structure comprises 423 residues: Lysosomal acid phosphatase (423 aa).

A signal peptide spans 1–30 (MAGKRSGWSRAALLQLLLGVNLVVMPPTQA). At 31 to 380 (RSLRFVTLLY…QVASGPADTE (350 aa)) the chain is on the lumenal side. Residue histidine 42 is the Nucleophile of the active site. N-linked (GlcNAc...) asparagine glycosylation is found at asparagine 92, asparagine 133, asparagine 167, asparagine 177, asparagine 191, and asparagine 267. Cystine bridges form between cysteine 159–cysteine 370, cysteine 212–cysteine 310, and cysteine 345–cysteine 349. The Proton donor role is filled by aspartate 287. Asparagine 322 and asparagine 331 each carry an N-linked (GlcNAc...) asparagine glycan. A helical transmembrane segment spans residues 381–401 (VIVALAVCGSILFLLIVLLLT). At 402-423 (VLFRMQAQPPGYRHVADGEDHA) the chain is on the cytoplasmic side.

This sequence belongs to the histidine acid phosphatase family. Post-translationally, the membrane-bound form is converted to the soluble form by sequential proteolytic processing. First, the C-terminal cytoplasmic tail is removed. Cleavage by a lysosomal protease releases the soluble form in the lysosome lumen.

The protein resides in the lysosome membrane. The protein localises to the lysosome lumen. It catalyses the reaction a phosphate monoester + H2O = an alcohol + phosphate. In Pongo abelii (Sumatran orangutan), this protein is Lysosomal acid phosphatase (ACP2).